The following is a 193-amino-acid chain: Ion-translocating oxidoreductase complex subunit A (193 aa).

The next 6 membrane-spanning stretches (helical) occupy residues 5-25 (ILLI…FLGL), 39-59 (IGMG…AYLV), 72-92 (LRTL…EMVI), 102-122 (LLGI…VALL), 134-154 (VIYG…FAAL), and 171-191 (SIAL…SGLV).

This sequence belongs to the NqrDE/RnfAE family. As to quaternary structure, the complex is composed of six subunits: RnfA, RnfB, RnfC, RnfD, RnfE and RnfG.

The protein resides in the cell inner membrane. Its function is as follows. Part of a membrane-bound complex that couples electron transfer with translocation of ions across the membrane. The protein is Ion-translocating oxidoreductase complex subunit A of Histophilus somni (strain 2336) (Haemophilus somnus).